The chain runs to 350 residues: Histidinol-phosphate aminotransferase 1 (350 aa).

Lys-211 carries the post-translational modification N6-(pyridoxal phosphate)lysine.

The protein belongs to the class-II pyridoxal-phosphate-dependent aminotransferase family. Histidinol-phosphate aminotransferase subfamily. As to quaternary structure, homodimer. Requires pyridoxal 5'-phosphate as cofactor.

It catalyses the reaction L-histidinol phosphate + 2-oxoglutarate = 3-(imidazol-4-yl)-2-oxopropyl phosphate + L-glutamate. It functions in the pathway amino-acid biosynthesis; L-histidine biosynthesis; L-histidine from 5-phospho-alpha-D-ribose 1-diphosphate: step 7/9. In Trichormus variabilis (strain ATCC 29413 / PCC 7937) (Anabaena variabilis), this protein is Histidinol-phosphate aminotransferase 1.